The sequence spans 316 residues: Acetyl-coenzyme A carboxylase carboxyl transferase subunit alpha (316 aa).

The CoA carboxyltransferase C-terminal domain occupies 39–293 (RLQDKSHALT…RQTLLAQLES (255 aa)).

Belongs to the AccA family. In terms of assembly, acetyl-CoA carboxylase is a heterohexamer composed of biotin carboxyl carrier protein (AccB), biotin carboxylase (AccC) and two subunits each of ACCase subunit alpha (AccA) and ACCase subunit beta (AccD).

It localises to the cytoplasm. It catalyses the reaction N(6)-carboxybiotinyl-L-lysyl-[protein] + acetyl-CoA = N(6)-biotinyl-L-lysyl-[protein] + malonyl-CoA. Its pathway is lipid metabolism; malonyl-CoA biosynthesis; malonyl-CoA from acetyl-CoA: step 1/1. Component of the acetyl coenzyme A carboxylase (ACC) complex. First, biotin carboxylase catalyzes the carboxylation of biotin on its carrier protein (BCCP) and then the CO(2) group is transferred by the carboxyltransferase to acetyl-CoA to form malonyl-CoA. The polypeptide is Acetyl-coenzyme A carboxylase carboxyl transferase subunit alpha (Azotobacter vinelandii (strain DJ / ATCC BAA-1303)).